The following is a 780-amino-acid chain: MADDEEEIIQKVEVKPDEFNGLIGSIAGNLIRDKVGGAGGDILGGLASNFFGGGGGGGGGGGGGGFGGGNGGFGGGSNYDQGGNGNSGDQQKRKRDMAKDLIGGIFDNVVNRKGKKEQDNYGGGGNYGGGGGNQGGGGGGGFNFNDIGGLINSMGGGGGGGQRQGGGGGGFGDILGGIGSLIGGGGGGQYNGGGGNVNPNNLNGGMVNVIGNLIGEAAHRFLGVDPGTGRIIGAVAGNVIMGLGGKDNSLGNIGKVILDNIISGKFRRDVDPFVRPGPDPDRGGGGSGPSPISPRPTTEPQDFYELRDQCLESKRLFEDPQFLANDSSLFFSKRPPKRVEWLRPGEITREPQLITEGHSRFDVIQGELGDCWLLAAAANLTLKDELFYRVVPPDQSFTENYAGIFHFQFWQYGKWVDVVIDDRLPTSNGELLYMHSASNNEFWSALLEKAYAKLFGSYEALKGGTTSEALEDMTGGLTEFIDLKNPPRNLMQMMMRGFEMGSLFGCSIEADPNVWEAKMSNGLVKGHAYSITGCRIVDGPNGQTCILRIRNPWGNEQEWNGPWSDNSREWRSVPDSVKQDMGLKFDHDGEFWMSFDDFMRNFEKMEICNLGPDVMDEVYQMTGVKAAGMVWAANTHDGAWVRNQTAGGCRNYINTFANNPQFRVQLTDSDPDDDDELCTVIFAVLQKYRRNLKQDGLDNVPIGFAVYDAGNNRGRLSKQFFAANKSAMRSAAFINLREMTGRFRVPPGNYVVVPSTFEPNEEAEFMLRVYTNGFIESEEL.

Basic and acidic residues predominate over residues 269–282 (DVDPFVRPGPDPDR). The disordered stretch occupies residues 269–300 (DVDPFVRPGPDPDRGGGGSGPSPISPRPTTEP). Positions 316 to 611 (LFEDPQFLAN…FEKMEICNLG (296 aa)) constitute a Calpain catalytic domain. Residues Cys-371, His-527, and Asn-551 contribute to the active site.

Belongs to the peptidase C2 family. In terms of tissue distribution, expressed in muscle and neuronal tissues. Expressed in the ventral and dorsal nerve cord, intestinal and hypodermal tissues.

Its subcellular location is the cytoplasm. It is found in the myofibril. The protein localises to the sarcomere. It localises to the m line. Its function is as follows. Calcium-regulated non-lysosomal thiol-protease which catalyzes limited proteolysis of substrates. Required for assembly and maintenance of integrin attachment complexes which are essential for maintenance of adult muscle. Proteolytic activity is activated in response to increased intracellular Ca(2+) levels during cell degeneration and promotes necrotic cell death. The sequence is that of Calpain clp-1 from Caenorhabditis elegans.